Consider the following 252-residue polypeptide: MLAKRIIPCLDVKEGRVVKGVNFIGLQDVGDPVEIAALYNDAGADEIVFLDITATHEGRKTIIDVVEKTASKVFIPLTVGGGISSVKDMYNLLRAGADKVSINSAAVRNPKLIEEGAQHFGSQCIVVAIDARKVAEGKWNVYVNGGRVDTGMDAIGWAKRVVMLGAGEILLTSMDADGTKNGYDLRLTEEISKSVSIPVIASGGCGHADHIIEVFQKTTVDAALAASIFHYGEATIGDVKRKLRNANVEVRL.

Residues Asp-11 and Asp-130 contribute to the active site.

It belongs to the HisA/HisF family. Heterodimer of HisH and HisF.

The protein resides in the cytoplasm. The enzyme catalyses 5-[(5-phospho-1-deoxy-D-ribulos-1-ylimino)methylamino]-1-(5-phospho-beta-D-ribosyl)imidazole-4-carboxamide + L-glutamine = D-erythro-1-(imidazol-4-yl)glycerol 3-phosphate + 5-amino-1-(5-phospho-beta-D-ribosyl)imidazole-4-carboxamide + L-glutamate + H(+). Its pathway is amino-acid biosynthesis; L-histidine biosynthesis; L-histidine from 5-phospho-alpha-D-ribose 1-diphosphate: step 5/9. Functionally, IGPS catalyzes the conversion of PRFAR and glutamine to IGP, AICAR and glutamate. The HisF subunit catalyzes the cyclization activity that produces IGP and AICAR from PRFAR using the ammonia provided by the HisH subunit. This chain is Imidazole glycerol phosphate synthase subunit HisF, found in Bacillus anthracis (strain CDC 684 / NRRL 3495).